The sequence spans 347 residues: Protein RecA (347 aa).

Residue 66-73 (GPESSGKT) participates in ATP binding. Residues 328-347 (MPKPNAPKATDEALDETGTD) are disordered.

The protein belongs to the RecA family.

Its subcellular location is the cytoplasm. Functionally, can catalyze the hydrolysis of ATP in the presence of single-stranded DNA, the ATP-dependent uptake of single-stranded DNA by duplex DNA, and the ATP-dependent hybridization of homologous single-stranded DNAs. It interacts with LexA causing its activation and leading to its autocatalytic cleavage. This chain is Protein RecA, found in Hydrogenovibrio crunogenus (strain DSM 25203 / XCL-2) (Thiomicrospira crunogena).